The chain runs to 276 residues: Undecaprenyl-diphosphatase 2 (276 aa).

Transmembrane regions (helical) follow at residues 4–24, 44–64, 87–107, 114–134, 150–170, 193–213, 225–245, and 256–276; these read IEAL…VSSL, DFLP…LIYF, ARLM…GLLL, LFAS…LLLW, LSFA…LPGF, FSFL…IPKL, LLLA…WFLM, and LRPF…FKLV.

The protein belongs to the UppP family.

The protein resides in the cell inner membrane. It carries out the reaction di-trans,octa-cis-undecaprenyl diphosphate + H2O = di-trans,octa-cis-undecaprenyl phosphate + phosphate + H(+). In terms of biological role, catalyzes the dephosphorylation of undecaprenyl diphosphate (UPP). Confers resistance to bacitracin. The protein is Undecaprenyl-diphosphatase 2 of Chromobacterium violaceum (strain ATCC 12472 / DSM 30191 / JCM 1249 / CCUG 213 / NBRC 12614 / NCIMB 9131 / NCTC 9757 / MK).